We begin with the raw amino-acid sequence, 95 residues long: Protein YY1 (95 aa).

An N-terminal signal peptide occupies residues 1 to 26; the sequence is MAVTRTALLVVLVAGAMTMTMRGAEA. Disulfide bonds link cysteine 31–cysteine 72, cysteine 41–cysteine 61, cysteine 62–cysteine 87, and cysteine 74–cysteine 94.

It belongs to the A9/FIL1 family. Anther.

The protein resides in the secreted. The chain is Protein YY1 from Oryza sativa subsp. japonica (Rice).